The chain runs to 142 residues: Gonadotropin subunit beta-2 (142 aa).

A signal peptide spans 1-24 (MLGLHVGTLMISLFLCILLEPVEG). Disulfide bonds link C30/C78, C44/C93, C47/C131, C55/C109, C59/C111, and C114/C121. N-linked (GlcNAc...) asparagine glycosylation is present at N34.

This sequence belongs to the glycoprotein hormones subunit beta family. Heterodimer of an alpha and a beta chain.

It is found in the secreted. Involved in gametogenesis and steroidogenesis. This is Gonadotropin subunit beta-2 (cgbb) from Coregonus autumnalis (Arctic cisco).